Here is a 52-residue protein sequence, read N- to C-terminus: Venom peptide 4b (52 aa).

The signal sequence occupies residues 1–23 (MRSAILLVIVAIVAILGFLGVNA). 3 AXPX repeats span residues 23-26 (AEPL), 31-34 (AEPN), and 39-42 (AAPL). Positions 24–41 (EPLPSPLAEPNPHAKAAP) are excised as a propeptide. The tract at residues 30–52 (LAEPNPHAKAAPLSPAAMASLAG) is disordered. The segment covering 37 to 52 (AKAAPLSPAAMASLAG) has biased composition (low complexity). Ala-51 is modified (alanine amide).

In terms of tissue distribution, expressed by the venom gland.

Its subcellular location is the secreted. This is Venom peptide 4b from Eumenes pomiformis (Potter wasp).